A 304-amino-acid polypeptide reads, in one-letter code: Acetyl-coenzyme A carboxylase carboxyl transferase subunit beta (304 aa).

Positions 23–292 (VWTKCDSCGQ…PNPEAPREGV (270 aa)) constitute a CoA carboxyltransferase N-terminal domain. 4 residues coordinate Zn(2+): cysteine 27, cysteine 30, cysteine 46, and cysteine 49. Residues 27–49 (CDSCGQVLYRAELERNLEVCPKC) form a C4-type zinc finger. Residues 284–304 (NPEAPREGVVVPPVPDQEPEA) form a disordered region. Positions 295–304 (PPVPDQEPEA) are enriched in pro residues.

This sequence belongs to the AccD/PCCB family. As to quaternary structure, acetyl-CoA carboxylase is a heterohexamer composed of biotin carboxyl carrier protein (AccB), biotin carboxylase (AccC) and two subunits each of ACCase subunit alpha (AccA) and ACCase subunit beta (AccD). Zn(2+) is required as a cofactor.

It is found in the cytoplasm. The enzyme catalyses N(6)-carboxybiotinyl-L-lysyl-[protein] + acetyl-CoA = N(6)-biotinyl-L-lysyl-[protein] + malonyl-CoA. It participates in lipid metabolism; malonyl-CoA biosynthesis; malonyl-CoA from acetyl-CoA: step 1/1. Functionally, component of the acetyl coenzyme A carboxylase (ACC) complex. Biotin carboxylase (BC) catalyzes the carboxylation of biotin on its carrier protein (BCCP) and then the CO(2) group is transferred by the transcarboxylase to acetyl-CoA to form malonyl-CoA. This chain is Acetyl-coenzyme A carboxylase carboxyl transferase subunit beta, found in Escherichia coli O139:H28 (strain E24377A / ETEC).